We begin with the raw amino-acid sequence, 186 residues long: Serine hydrolase RBBP9 (186 aa).

The interval 63–67 (LHCDE) is involved in binding to RB1. Residues S75, D138, and H165 each act as charge relay system in the active site.

It belongs to the RBBP9 family. As to quaternary structure, interacts with RB1; the interaction disrupts RB1 binding to E2F1. Interacts with RBL1 and RBL2. As to expression, highly expressed in the spleen, testis and kidney. Also found in the heart, liver, lung and brain.

The enzyme catalyses valacyclovir + H2O = acyclovir + L-valine + H(+). Serine hydrolase. Catalyzes the hydrolytic activation of amino acid ester of the antiviral prodrug valacyclovir to its corresponding active drug, acyclovir. May negatively regulate basal or autocrine TGF-beta signaling by suppressing SMAD2-SMAD3 phosphorylation. May play a role in the transformation process due to its capacity to confer resistance to the growth-inhibitory effects of TGF-beta through interaction with RB1 and the subsequent displacement of E2F1. The polypeptide is Serine hydrolase RBBP9 (Rattus norvegicus (Rat)).